The sequence spans 367 residues: UDP-N-acetylglucosamine--N-acetylmuramyl-(pentapeptide) pyrophosphoryl-undecaprenol N-acetylglucosamine transferase (367 aa).

UDP-N-acetyl-alpha-D-glucosamine is bound by residues 13 to 15, N127, R168, S200, I251, and Q296; that span reads TGG.

Belongs to the glycosyltransferase 28 family. MurG subfamily.

The protein localises to the cell inner membrane. The enzyme catalyses di-trans,octa-cis-undecaprenyl diphospho-N-acetyl-alpha-D-muramoyl-L-alanyl-D-glutamyl-meso-2,6-diaminopimeloyl-D-alanyl-D-alanine + UDP-N-acetyl-alpha-D-glucosamine = di-trans,octa-cis-undecaprenyl diphospho-[N-acetyl-alpha-D-glucosaminyl-(1-&gt;4)]-N-acetyl-alpha-D-muramoyl-L-alanyl-D-glutamyl-meso-2,6-diaminopimeloyl-D-alanyl-D-alanine + UDP + H(+). It functions in the pathway cell wall biogenesis; peptidoglycan biosynthesis. Cell wall formation. Catalyzes the transfer of a GlcNAc subunit on undecaprenyl-pyrophosphoryl-MurNAc-pentapeptide (lipid intermediate I) to form undecaprenyl-pyrophosphoryl-MurNAc-(pentapeptide)GlcNAc (lipid intermediate II). This chain is UDP-N-acetylglucosamine--N-acetylmuramyl-(pentapeptide) pyrophosphoryl-undecaprenol N-acetylglucosamine transferase, found in Flavobacterium psychrophilum (strain ATCC 49511 / DSM 21280 / CIP 103535 / JIP02/86).